We begin with the raw amino-acid sequence, 276 residues long: Prohibitin 1 (276 aa).

This sequence belongs to the prohibitin family.

Its function is as follows. Required for larval metabolism or for the progression of the larva into a pupa. The polypeptide is Prohibitin 1 (Drosophila melanogaster (Fruit fly)).